A 185-amino-acid polypeptide reads, in one-letter code: Translocon-associated protein subunit gamma (185 aa).

Position 1 is an N-acetylmethionine (Met-1). Residues Met-1–Lys-27 are Lumenal-facing. Phosphoserine is present on Ser-11. A helical transmembrane segment spans residues Ser-28 to Trp-48. Residues Arg-49–Asp-54 lie on the Cytoplasmic side of the membrane. The helical transmembrane segment at Leu-55–Ala-76 threads the bilayer. Residues Tyr-77–Thr-135 are Lumenal-facing. Phosphoserine is present on Ser-105. The helical transmembrane segment at Phe-136–Leu-157 threads the bilayer. Residues Lys-158–Thr-163 lie on the Cytoplasmic side of the membrane. A helical transmembrane segment spans residues Val-164 to Ser-184.

This sequence belongs to the TRAP-gamma family. As to quaternary structure, heterotetramer of TRAP-alpha, TRAP-beta, TRAP-delta and TRAP-gamma.

It is found in the endoplasmic reticulum membrane. Its function is as follows. TRAP proteins are part of a complex whose function is to bind calcium to the ER membrane and thereby regulate the retention of ER resident proteins. This is Translocon-associated protein subunit gamma (SSR3) from Bos taurus (Bovine).